The primary structure comprises 270 residues: UPF0354 protein BCA_4815 (270 aa).

The protein belongs to the UPF0354 family.

The polypeptide is UPF0354 protein BCA_4815 (Bacillus cereus (strain 03BB102)).